Reading from the N-terminus, the 374-residue chain is Glycerophosphodiester phosphodiesterase GDPD2 (374 aa).

The region spanning 38–326 (FSVIGHRGIG…DFVEEIIEST (289 aa)) is the GP-PDE domain. A disordered region spans residues 330–349 (MIRPPPSSSPLPSPSKDDDV). Over residues 332–342 (RPPPSSSPLPS) the composition is skewed to pro residues.

The protein belongs to the glycerophosphoryl diester phosphodiesterase family. Expressed in roots, shoots, flowers and siliques.

The enzyme catalyses a sn-glycero-3-phosphodiester + H2O = an alcohol + sn-glycerol 3-phosphate + H(+). The polypeptide is Glycerophosphodiester phosphodiesterase GDPD2 (Arabidopsis thaliana (Mouse-ear cress)).